Consider the following 1248-residue polypeptide: Cullin-associated NEDD8-dissociated protein 1 (1248 aa).

HEAT repeat units lie at residues 44–82 (DESE…KVKE), 127–165 (PNVC…RFGE), 168–206 (VPFH…QANS), 365–403 (EDFY…NTRL), 425–463 (IEQL…SLPG), 510–548 (HPHI…VIRP), 604–642 (QNEL…LRID), 644–682 (TPIL…NYSS), 861–900 (DLSS…GSLQ), 976–1014 (LVNP…DQPQ), and 1054–1093 (PSLV…TVDD).

This sequence belongs to the CAND family.

Its function is as follows. Key assembly factor of SCF (SKP1-CUL1-F-box protein) E3 ubiquitin ligase complexes that promotes the exchange of the substrate-recognition F-box subunit in SCF complexes, thereby playing a key role in the cellular repertoire of SCF complexes. Acts as a F-box protein exchange factor. Probably plays a similar role in other cullin-RING E3 ubiquitin ligase complexes. This is Cullin-associated NEDD8-dissociated protein 1 (Cand1) from Drosophila melanogaster (Fruit fly).